Here is a 607-residue protein sequence, read N- to C-terminus: Elongation factor 4 (607 aa).

The region spanning 11-193 (KNIRNFSIIA…KIVETIPAPS (183 aa)) is the tr-type G domain. Residues 23–28 (DHGKST) and 140–143 (NKID) each bind GTP.

The protein belongs to the TRAFAC class translation factor GTPase superfamily. Classic translation factor GTPase family. LepA subfamily.

The protein resides in the cell membrane. The enzyme catalyses GTP + H2O = GDP + phosphate + H(+). Its function is as follows. Required for accurate and efficient protein synthesis under certain stress conditions. May act as a fidelity factor of the translation reaction, by catalyzing a one-codon backward translocation of tRNAs on improperly translocated ribosomes. Back-translocation proceeds from a post-translocation (POST) complex to a pre-translocation (PRE) complex, thus giving elongation factor G a second chance to translocate the tRNAs correctly. Binds to ribosomes in a GTP-dependent manner. The sequence is that of Elongation factor 4 from Staphylococcus carnosus (strain TM300).